The following is a 583-amino-acid chain: SHC-transforming protein 1 (583 aa).

Met-1 bears the N-acetylmethionine mark. Residues 1 to 92 (MDLLPPKPKY…EPGRAADDGE (92 aa)) are disordered. The span at 16 to 44 (ESLSSLEEGASGSTPPEELPSPSASSLGP) shows a compositional bias: low complexity. 2 positions are modified to phosphoserine: Ser-36 and Ser-139. Lys-154 carries the N6-acetyllysine modification. Residues 156–339 (MGPGVSYLVR…AGFDGSAWDE (184 aa)) enclose the PID domain. Positions 340–487 (EEEEPPDHQY…SMAEQLRGEP (148 aa)) are CH1. Phosphotyrosine is present on residues Tyr-349 and Tyr-350. Low complexity predominate over residues 372-384 (AAPGAARPTAPNA). A disordered region spans residues 372 to 415 (AAPGAARPTAPNAQTPSHLGATLPVGQPVGGDPEVRKQMPPPPP). Tyr-427 bears the Phosphotyrosine mark. Residue Ser-453 is modified to Phosphoserine. Residues 488–579 (WFHGKLSRRE…GSELCLQQPV (92 aa)) form the SH2 domain.

Interacts with CPNE3; this interaction may mediate the binding of CPNE3 with ERBB2. Interacts with the NPXY motif of tyrosine-phosphorylated IGF1R and INSR in vitro via the PID domain. Once activated, binds to GRB2. Interacts with tyrosine-phosphorylated CD3T and DDR2. Interacts with the N-terminal region of SH2B2. Interacts with phosphorylated LRP1 and IRS4. Interacts with INPP5D/SHIP1 and INPPL1/SHIP2. Interacts with TRIM31. Interacts with PTPN6/SHP (tyrosine phosphorylated). Identified in a complex containing FGFR4, NCAM1, CDH2, PLCG1, FRS2, SRC, SHC1, GAP43 and CTT. Interacts with ALK, GAB2, GRB7 and KIT. Interacts with FLT4 (tyrosine-phosphorylated). Interacts with EPHB1 and GRB2; activates the MAPK/ERK cascade to regulate cell migration. Interacts with PDGFRB (tyrosine-phosphorylated). Interacts with ERBB4. Interacts with TEK/TIE2 (tyrosine-phosphorylated). Interacts with the Trk receptors NTRK1, NTRK2 and NTRK3; in a phosphotyrosine-dependent manner. Interacts with PTK2/FAK1. Interacts with CEACAM1; this interaction is CEACAM1-phosphorylation-dependent and mediates interaction with EGFR or INSR resulting in decrease coupling of SHC1 to the MAPK3/ERK1-MAPK1/ERK2 pathway. Interacts (via PID domain) with PEAK1 (when phosphorylated at 'Tyr-1188'). Found in a complex with PPP1CA, PPP1CC, SHC1 and PEAK1. In terms of assembly, (Microbial infection) Interacts with herpes simplex virus 1 UL46. Phosphorylated by activated epidermal growth factor receptor. Phosphorylated in response to FLT4 and KIT signaling. Isoform p46Shc and isoform p52Shc are phosphorylated on tyrosine residues of the Pro-rich domain. Isoform p66Shc is phosphorylated on Ser-36 by PRKCB upon treatment with insulin, hydrogen peroxide or irradiation with ultraviolet light. Tyrosine phosphorylated in response to FLT3 signaling. Tyrosine phosphorylated by activated PTK2B/PYK2. Tyrosine phosphorylated by ligand-activated ALK. Tyrosine phosphorylated by ligand-activated PDGFRB. Tyrosine phosphorylated by TEK/TIE2. May be tyrosine phosphorylated by activated PTK2/FAK1; tyrosine phosphorylation was seen in an astrocytoma biopsy, where PTK2/FAK1 kinase activity is high, but not in normal brain tissue. Isoform p52Shc dephosphorylation by PTPN2 may regulate interaction with GRB2. Widely expressed. Expressed in neural stem cells but absent in mature neurons.

It is found in the cytoplasm. The protein localises to the cell junction. It localises to the focal adhesion. The protein resides in the mitochondrion matrix. Its subcellular location is the mitochondrion. Functionally, signaling adapter that couples activated growth factor receptors to signaling pathways. Participates in a signaling cascade initiated by activated KIT and KITLG/SCF. Isoform p46Shc and isoform p52Shc, once phosphorylated, couple activated receptor tyrosine kinases to Ras via the recruitment of the GRB2/SOS complex and are implicated in the cytoplasmic propagation of mitogenic signals. Isoform p46Shc and isoform p52Shc may thus function as initiators of the Ras signaling cascade in various non-neuronal systems. Isoform p66Shc does not mediate Ras activation, but is involved in signal transduction pathways that regulate the cellular response to oxidative stress and life span. Isoform p66Shc acts as a downstream target of the tumor suppressor p53 and is indispensable for the ability of stress-activated p53 to induce elevation of intracellular oxidants, cytochrome c release and apoptosis. The expression of isoform p66Shc has been correlated with life span. Participates in signaling downstream of the angiopoietin receptor TEK/TIE2, and plays a role in the regulation of endothelial cell migration and sprouting angiogenesis. The protein is SHC-transforming protein 1 (SHC1) of Homo sapiens (Human).